Here is a 618-residue protein sequence, read N- to C-terminus: Nuclear RNA export factor 1 (618 aa).

Residues 1-15 (MADEGKSYNEHDDRV) show a composition bias toward basic and acidic residues. The interval 1–113 (MADEGKSYNE…RGGAGTSQDG (113 aa)) is disordered. N-acetylalanine is present on alanine 2. The segment at 2–59 (ADEGKSYNEHDDRVSFPQRRKKGRGPFRWKCGVGNRRSGRGGSGIRSSRFEEDDGDVA) is minor non-specific RNA-binding. The tract at residues 2 to 117 (ADEGKSYNEH…GTSQDGTTKN (116 aa)) is RNA-binding (RBD). An interaction with ALYREF/THOC4 and LUZP4 region spans residues 2 to 197 (ADEGKSYNEH…IIINSSAPPY (196 aa)). The span at 19–28 (QRRKKGRGPF) shows a compositional bias: basic residues. At arginine 41 the chain carries Asymmetric dimethylarginine; alternate. Residue arginine 41 is modified to Omega-N-methylarginine; alternate. The segment at 60–117 (MNDPQDGPRVRFNPYTTRPNRRRDTWHDRDRIHVTVRRDRAPQERGGAGTSQDGTTKN) is major non-specific RNA-binding. An RNA binding region spans residues 60–117 (MNDPQDGPRVRFNPYTTRPNRRRDTWHDRDRIHVTVRRDRAPQERGGAGTSQDGTTKN). The Nuclear localization signal motif lies at 66–99 (GPRVRFNPYTTRPNRRRDTWHDRDRIHVTVRRDR). Residues 81 to 102 (RRDTWHDRDRIHVTVRRDRAPQ) show a composition bias toward basic and acidic residues. The short motif at 82 to 109 (RDTWHDRDRIHVTVRRDRAPQERGGAGT) is the Nuclear export signal element. In terms of domain architecture, RRM spans 118–197 (WFKITIPYGK…IIINSSAPPY (80 aa)). Tyrosine 125 is modified (3'-nitrotyrosine). LRR repeat units follow at residues 265–290 (ELLS…QKAP), 291–314 (NLKI…IKGL), 315–342 (KLEE…TIRE), and 343–370 (RFPK…TMLP). The NTF2 domain maps to 385-535 (LVLHFLQQYY…LCIVNDELFV (151 aa)). A TAP-C domain is found at 564–618 (QEQQDMLQAFSTQSGMNLEWSQKCLQDNNWDYTRSAQAFTHLKAKGEIPEVAFMK).

This sequence belongs to the NXF family. As to quaternary structure, heterodimer (via NTF2 domain) with NXT1. The formation of NXF1-NXT1 heterodimers is required for the NXF1-mediated nuclear mRNA export. Forms a complex with RANBP2/NUP358, NXT1 and RANGAP1. Associates with the exon junction complex (EJC). Associates with the transcription/export (TREX) complex. Found in a mRNA complex with UPF3A and UPF3B. Found in a post-splicing complex with RBM8A, UPF1, UPF2, UPF3A, UPF3B and RNPS1. Interacts (via N-terminus) with DHX9 (via N-terminus); this interaction is direct and negatively regulates NXF1-mediated nuclear export of constitutive transport element (CTE)-containing cellular mRNAs. Interacts with FYTTD1/UIF. Interacts with EIF4A3. Interacts with NUP42. Interacts with ALYREF/THOC4. Interacts with CHTOP. Interacts with FRG1 (via N-terminus). Interacts with LUZP4. Interacts with FMR1; the interaction occurs in a mRNA-dependent and polyribosomes-independent manner in the nucleus. Interacts with CPSF6 (via N-terminus); this interaction is direct. Interacts with RBM15. Interacts with RBM15B. Interacts with MCM3AP; this interaction is not mediated by RNA. Interacts with DDX3X (via C-terminus); this interaction may be partly involved in DDX3X nuclear export and in NXF1 localization to stress granules. Interacts with PABPC1/PABP1.

The protein localises to the nucleus. Its subcellular location is the nucleoplasm. The protein resides in the nucleus speckle. It is found in the nuclear pore complex. It localises to the nucleus envelope. The protein localises to the cytoplasm. Its subcellular location is the stress granule. Its function is as follows. Involved in the nuclear export of mRNA species bearing retroviral constitutive transport elements (CTE) and in the export of mRNA from the nucleus to the cytoplasm (TAP/NFX1 pathway). The NXF1-NXT1 heterodimer is involved in the export of HSP70 mRNA in conjunction with ALYREF/THOC4 and THOC5 components of the TREX complex. ALYREF/THOC4-bound mRNA is thought to be transferred to the NXF1-NXT1 heterodimer for export. Also involved in nuclear export of m6A-containing mRNAs: interaction between SRSF3 and YTHDC1 facilitates m6A-containing mRNA-binding to both SRSF3 and NXF1, promoting mRNA nuclear export. In Rattus norvegicus (Rat), this protein is Nuclear RNA export factor 1 (Nxf1).